Consider the following 235-residue polypeptide: Casparian strip membrane protein 2 (235 aa).

Residues 1-70 lie on the Cytoplasmic side of the membrane; sequence MTSESATVIQ…RSGAEGFRRC (70 aa). The helical transmembrane segment at 71–91 threads the bilayer; that stretch reads LAVIDFLLRVAAFGPTLAAAI. Topologically, residues 92–118 are extracellular; that stretch reads STGTADERLSVFTNFFQFHARFDDFPA. The helical transmembrane segment at 119 to 139 threads the bilayer; that stretch reads FTFFLVANAVAAGYLVLSLPF. Residues 140–162 lie on the Cytoplasmic side of the membrane; the sequence is SVVVILRPNKATGGVRLLLLLCD. The helical transmembrane segment at 163 to 183 threads the bilayer; sequence VLIMALLTAAGAAAAAIVYVA. Residues 184-210 lie on the Extracellular side of the membrane; the sequence is HSGNRRANWVPICMQFHGFCQRTSGSV. A helical membrane pass occupies residues 211-231; sequence VATFLAVLVFIVLILMAACVI. Over 232–235 the chain is Cytoplasmic; it reads RRSK.

It belongs to the Casparian strip membrane proteins (CASP) family. In terms of assembly, homodimer and heterodimers.

The protein localises to the cell membrane. Functionally, regulates membrane-cell wall junctions and localized cell wall deposition. Required for establishment of the Casparian strip membrane domain (CSD) and the subsequent formation of Casparian strips, a cell wall modification of the root endodermis that determines an apoplastic barrier between the intraorganismal apoplasm and the extraorganismal apoplasm and prevents lateral diffusion. In Sorghum bicolor (Sorghum), this protein is Casparian strip membrane protein 2.